A 376-amino-acid polypeptide reads, in one-letter code: MSNKSVLLIAGEPSGDLLGAHLAQSLKSLEPNLKLAGMGGKRMREAGVEVFINADKLAVVGLLEILRQFRDIRHAMQTLKRYFKKTPPDLVVFIDYPGFNLHMAKQAKKAGIKVLYYVSPQIWAWRYGRIKKIKKYVDHMAVLFDFEEKLYQKENVPVSFVGHPLANAPTPSLSRNEICKQFNLDPDKPIVALFPGSREQEINKLLPMMVQAGKLIQTQIPTVQFILPLALNLALDKIRPFLSPEIKVIQNDISHVLAIAHAAVAASGTVTLEIALQQVPLVIIYKVAPLTFWLGKKLIRLSFIGLCNLVSPEPVAVELLQQDATPQAIADEVFQLLNNHNYRQSIIGKLGHLRPQLDRGNAAQNVAKVIHNLIFS.

This sequence belongs to the LpxB family.

It carries out the reaction a lipid X + a UDP-2-N,3-O-bis[(3R)-3-hydroxyacyl]-alpha-D-glucosamine = a lipid A disaccharide + UDP + H(+). It functions in the pathway bacterial outer membrane biogenesis; LPS lipid A biosynthesis. In terms of biological role, condensation of UDP-2,3-diacylglucosamine and 2,3-diacylglucosamine-1-phosphate to form lipid A disaccharide, a precursor of lipid A, a phosphorylated glycolipid that anchors the lipopolysaccharide to the outer membrane of the cell. The sequence is that of Lipid-A-disaccharide synthase from Coxiella burnetii (strain CbuG_Q212) (Coxiella burnetii (strain Q212)).